We begin with the raw amino-acid sequence, 312 residues long: 4-hydroxyproline 2-epimerase (312 aa).

Residue C88 is the Proton acceptor of the active site. Substrate is bound by residues 89 to 90 (GH), H208, and D234. C238 (proton donor) is an active-site residue. Residue 239–240 (GT) participates in substrate binding.

Belongs to the proline racemase family.

It carries out the reaction trans-4-hydroxy-L-proline = cis-4-hydroxy-D-proline. Its function is as follows. Catalyzes the epimerization of trans-4-hydroxy-L-proline (t4LHyp) to cis-4-hydroxy-D-proline (c4DHyp). Is likely involved in a degradation pathway that converts t4LHyp to alpha-ketoglutarate. Can also catalyze the epimerization of trans-3-hydroxy-L-proline (t3LHyp) to cis-3-hydroxy-D-proline (c3DHyp), albeit with 500-fold lower efficiency. Displays no proline racemase activity. The chain is 4-hydroxyproline 2-epimerase from Xanthomonas campestris pv. campestris (strain ATCC 33913 / DSM 3586 / NCPPB 528 / LMG 568 / P 25).